The following is a 145-amino-acid chain: Large ribosomal subunit protein uL16 (145 aa).

This sequence belongs to the universal ribosomal protein uL16 family. Part of the 50S ribosomal subunit.

Functionally, binds 23S rRNA and is also seen to make contacts with the A and possibly P site tRNAs. The chain is Large ribosomal subunit protein uL16 from Desulfitobacterium hafniense (strain DSM 10664 / DCB-2).